We begin with the raw amino-acid sequence, 95 residues long: DNA-directed RNA polymerase subunit Rpo11 (95 aa).

Belongs to the archaeal Rpo11/eukaryotic RPB11/RPC19 RNA polymerase subunit family. As to quaternary structure, part of the RNA polymerase complex.

The protein localises to the cytoplasm. The enzyme catalyses RNA(n) + a ribonucleoside 5'-triphosphate = RNA(n+1) + diphosphate. Its function is as follows. DNA-dependent RNA polymerase (RNAP) catalyzes the transcription of DNA into RNA using the four ribonucleoside triphosphates as substrates. The polypeptide is DNA-directed RNA polymerase subunit Rpo11 (Pyrococcus abyssi (strain GE5 / Orsay)).